A 270-amino-acid polypeptide reads, in one-letter code: tRNA pseudouridine synthase A (270 aa).

Aspartate 51 (nucleophile) is an active-site residue. A substrate-binding site is contributed by tyrosine 109.

The protein belongs to the tRNA pseudouridine synthase TruA family. In terms of assembly, homodimer.

The catalysed reaction is uridine(38/39/40) in tRNA = pseudouridine(38/39/40) in tRNA. Functionally, formation of pseudouridine at positions 38, 39 and 40 in the anticodon stem and loop of transfer RNAs. The sequence is that of tRNA pseudouridine synthase A from Burkholderia mallei (strain ATCC 23344).